A 1117-amino-acid chain; its full sequence is Cytospin-A (1117 aa).

Disordered regions lie at residues 1 to 176, 293 to 323, and 358 to 390; these read MKKA…NQIS, SLSP…GSVE, and SSDD…NASE. 2 stretches are compositionally biased toward low complexity: residues 45 to 72 and 99 to 119; these read TTAS…TNGV and KIST…NKES. Composition is skewed to basic and acidic residues over residues 120–131 and 158–171; these read SSTRERLRERTR and TTTE…KSKS. A coiled-coil region spans residues 168–280; it reads KSKSDNQISD…LNALGFSLEQ (113 aa). The segment covering 293-303 has biased composition (polar residues); it reads SLSPEITPGNQ. The segment covering 358–377 has biased composition (low complexity); sequence SSDDALDAPSSSESEGIPSI. 3 positions are modified to phosphoserine: S384, S385, and S389. Coiled coils occupy residues 394 to 449 and 487 to 807; these read ACLT…MESL and RYME…RGRV. The interval 852 to 878 is disordered; it reads SQVPNPTAAAIPRTPLSPSPMKTPPAA. Phosphoserine is present on residues S868, S881, and S887. Residues 920–997 form a disordered region; the sequence is TSSTSRPASL…PTTRSRIREE (78 aa). The span at 946–956 shows a compositional bias: basic and acidic residues; sequence RSSEEMKRDIS. Low complexity predominate over residues 971–990; the sequence is TTSPQLSLSSSPTASVTPTT. The Calponin-homology (CH) domain maps to 1011–1116; sequence GSKRNALLKW…YVTAIYKYFE (106 aa).

It belongs to the cytospin-A family. May interact with both microtubules and actin cytoskeleton.

Its subcellular location is the cytoplasm. It is found in the cytoskeleton. The protein localises to the spindle. It localises to the cell junction. The protein resides in the gap junction. In terms of biological role, involved in cytokinesis and spindle organization. May play a role in actin cytoskeleton organization and microtubule stabilization and hence required for proper cell adhesion and migration. This chain is Cytospin-A (SPECC1L), found in Canis lupus familiaris (Dog).